A 1080-amino-acid chain; its full sequence is Headcase protein (1080 aa).

Disordered stretches follow at residues 1-27, 181-277, 310-335, 655-693, 798-826, 891-916, and 940-974; these read MAPR…LQQQ, IYLN…GNNG, SLSS…ISVS, PLES…QPPK, SKYQ…QHAT, SGCS…DGSK, and QRQQ…NGWS. The segment covering 181–197 has biased composition (polar residues); the sequence is IYLNGSGNRPTLANGSL. Residues 218 to 228 are compositionally biased toward gly residues; sequence NGGGGGGGAGV. Residues 232-251 are compositionally biased toward polar residues; the sequence is TKTPLSNNNGNSYAGLTPNP. Over residues 263–277 the composition is skewed to low complexity; the sequence is NNGNTASNGSSGNNG. Positions 663-688 are enriched in polar residues; the sequence is GATTTQVPNAQGSPTASGCSSNTIAS. The span at 801–826 shows a compositional bias: low complexity; sequence QQQQHQQQQQQRQQQHNLQPQQQHAT. The segment covering 900–913 has biased composition (polar residues); it reads QPSLSPTASSNGND. Low complexity predominate over residues 941 to 974; sequence RQQPPQQQVPQQQPHAASPTASLTSSSSSSNGWS.

Expressed in all imaginal cells of the embryo and larvae. Expressed in a subset of tracheal fusion cells from stage 14 to the end of embryogenesis in metameres 2-9, lateral trunk and ventral anastomoses.

Its subcellular location is the cytoplasm. Required for imaginal cell differentiation, may be involved in hormonal responsiveness during metamorphosis. Involved in an inhibitory signaling mechanism to determine the number of cells that will form unicellular sprouts in the trachea. Regulated by transcription factor esg. The longer hdc protein is completely functional and the shorter protein carries some function. The polypeptide is Headcase protein (Drosophila melanogaster (Fruit fly)).